Reading from the N-terminus, the 77-residue chain is U14-theraphotoxin-Cg1a 1 (77 aa).

An N-terminal signal peptide occupies residues 1–21 (MKTSVLLVILGIAAITVQCTA). Residues 22–49 (SESVEQDSLRTFVDAVLGWNAEMASEAR) constitute a propeptide that is removed on maturation. Cystine bridges form between Cys50–Cys64, Cys57–Cys69, and Cys63–Cys75. A Lysine amide modification is found at Lys77.

It belongs to the neurotoxin 10 (Hwtx-1) family. 65 (Jztx-21) subfamily. In terms of tissue distribution, expressed by the venom gland.

It localises to the secreted. Its function is as follows. Probable ion channel inhibitor. The polypeptide is U14-theraphotoxin-Cg1a 1 (Chilobrachys guangxiensis (Chinese earth tiger tarantula)).